The following is a 157-amino-acid chain: Succinate dehydrogenase assembly factor 2-B, mitochondrial (157 aa).

Residues 1–24 (MLRQFLFSTASRRLVRPMIAPHRS) constitute a mitochondrion transit peptide.

This sequence belongs to the SDHAF2 family. Interacts with the flavoprotein subunit within the SDH catalytic dimer.

It is found in the mitochondrion matrix. In terms of biological role, plays an essential role in the assembly of succinate dehydrogenase (SDH), an enzyme complex (also referred to as respiratory complex II) that is a component of both the tricarboxylic acid (TCA) cycle and the mitochondrial electron transport chain, and which couples the oxidation of succinate to fumarate with the reduction of ubiquinone (coenzyme Q) to ubiquinol. Required for flavinylation (covalent attachment of FAD) of the flavoprotein subunit of the SDH catalytic dimer. This chain is Succinate dehydrogenase assembly factor 2-B, mitochondrial, found in Drosophila persimilis (Fruit fly).